The sequence spans 1981 residues: Nonribosomal peptide synthetase rstn8 (1981 aa).

Residues 251 to 638 (SYAALEQESA…ELGEIEYQAS (388 aa)) form an adenylation region. The Carrier 1 domain occupies 763–840 (HHAGQKYDEM…ELFHRSQKTP (78 aa)). The residue at position 800 (serine 800) is an O-(pantetheine 4'-phosphoryl)serine. Positions 883–1293 (EDIYPCSPLQ…DASMGTILSQ (411 aa)) are condensation 1. Residues 1438–1514 (EPLLPLEATL…CLASTLNSRP (77 aa)) enclose the Carrier 2 domain. Serine 1475 is modified (O-(pantetheine 4'-phosphoryl)serine). The interval 1586 to 1978 (EEQIDLVSFA…TFAQSIERII (393 aa)) is condensation 1. The tract at residues 1754–1774 (HHHHQHEGRQHHGASETNGNR) is disordered.

The protein belongs to the NRP synthetase family. It depends on pantetheine 4'-phosphate as a cofactor.

It carries out the reaction 2 L-tryptophan = cyclo(L-Trp-L-Trp) + 2 H2O. It participates in alkaloid biosynthesis. Its function is as follows. Nonribosomal peptide synthetase; part of the gene cluster that mediates the biosynthesis of okaramine B, a prenylated indole alkaloid that possesses an unusual octacyclic ring system, including a four-membered azetidine ring and an eight-membered azocine ring, and that exhibits insecticidal activity against silkworm larvae. Within the pathway, okaA acts as a bimodular non-ribosomal peptide synthetase (NRPS) that condenses two tryptophan molecules into cyclo(L-Trp-L-Trp). Prenylation by the prenyltransferase okaC then leads to the formation of cyclo(N8-(alpha,alpha-dimethylallyl)-L-Trp-6a-(alpha,alpha-dime-thylallyl)-L-Trp). This is followed by indole 2,3-epoxidation by the FAD-dependent monooxygenase okaB to facilitate the formation of the hexahydropyrrolo[2,3-b]indole (HPI) moiety of okaramine C. The cytochrome P450 monooxygenase okaD then likely catalyzes formation of the eight-membered ring of okaramine A. The dioxygenase okaE further forms the unusual 2-dimethyl-3-methyl-azetidine ring to yield 12-deshydroxyl okaramine E, as well as the hydroxylation of 12-deshydroxyl okaramine E to produce okaramine E. The cytochrome P450 monoxygenase okaG converts 12-deshydroxyl okaramine E into 3-desmethyl okaramine B which is further methylated by the methyltransferase okaF into okaramine B. In a shunt pathway, okaG and okaF together are also able to convert okaramine E into okaramine D. Okaramine H is produced by nonenzymatic conversion from okaramine A. The polypeptide is Nonribosomal peptide synthetase rstn8 (Penicillium ochrochloron).